A 455-amino-acid polypeptide reads, in one-letter code: Kynurenine 3-monooxygenase (455 aa).

This sequence belongs to the aromatic-ring hydroxylase family. KMO subfamily. It depends on FAD as a cofactor.

It catalyses the reaction L-kynurenine + NADPH + O2 + H(+) = 3-hydroxy-L-kynurenine + NADP(+) + H2O. The protein operates within cofactor biosynthesis; NAD(+) biosynthesis; quinolinate from L-kynurenine: step 1/3. Functionally, catalyzes the hydroxylation of L-kynurenine (L-Kyn) to form 3-hydroxy-L-kynurenine (L-3OHKyn). Required for synthesis of quinolinic acid. In Xanthomonas euvesicatoria pv. vesicatoria (strain 85-10) (Xanthomonas campestris pv. vesicatoria), this protein is Kynurenine 3-monooxygenase.